Reading from the N-terminus, the 276-residue chain is S-adenosylmethionine decarboxylase proenzyme (276 aa).

The active-site Schiff-base intermediate with substrate; via pyruvic acid is Ser-124. At Ser-124 the chain carries Pyruvic acid (Ser); by autocatalysis. The active-site Proton acceptor; for processing activity is the His-129. Residue Cys-152 is the Proton donor; for catalytic activity of the active site.

It belongs to the prokaryotic AdoMetDC family. Type 2 subfamily. As to quaternary structure, heterooctamer of four alpha and four beta chains arranged as a tetramer of alpha/beta heterodimers. Requires pyruvate as cofactor. In terms of processing, is synthesized initially as an inactive proenzyme. Formation of the active enzyme involves a self-maturation process in which the active site pyruvoyl group is generated from an internal serine residue via an autocatalytic post-translational modification. Two non-identical subunits are generated from the proenzyme in this reaction, and the pyruvate is formed at the N-terminus of the alpha chain, which is derived from the carboxyl end of the proenzyme. The post-translation cleavage follows an unusual pathway, termed non-hydrolytic serinolysis, in which the side chain hydroxyl group of the serine supplies its oxygen atom to form the C-terminus of the beta chain, while the remainder of the serine residue undergoes an oxidative deamination to produce ammonia and the pyruvoyl group blocking the N-terminus of the alpha chain.

It carries out the reaction S-adenosyl-L-methionine + H(+) = S-adenosyl 3-(methylsulfanyl)propylamine + CO2. It participates in amine and polyamine biosynthesis; S-adenosylmethioninamine biosynthesis; S-adenosylmethioninamine from S-adenosyl-L-methionine: step 1/1. Catalyzes the decarboxylation of S-adenosylmethionine to S-adenosylmethioninamine (dcAdoMet), the propylamine donor required for the synthesis of the polyamines spermine and spermidine from the diamine putrescine. The protein is S-adenosylmethionine decarboxylase proenzyme of Desulfitobacterium hafniense (strain DSM 10664 / DCB-2).